Consider the following 480-residue polypeptide: tRNA (uracil-5-)-methyltransferase homolog B (480 aa).

The S-adenosyl-L-methionine site is built by Gln-299, Glu-349, and Asn-399. Residue Cys-427 is the Nucleophile of the active site. Glu-473 acts as the Proton acceptor in catalysis.

Belongs to the class I-like SAM-binding methyltransferase superfamily. RNA M5U methyltransferase family.

It is found in the mitochondrion. It catalyses the reaction uridine(54) in tRNA + S-adenosyl-L-methionine = 5-methyluridine(54) in tRNA + S-adenosyl-L-homocysteine + H(+). It carries out the reaction a uridine in 12S rRNA + S-adenosyl-L-methionine = a 5-methyluridine in 12S rRNA + S-adenosyl-L-homocysteine + H(+). In terms of biological role, mitochondrial S-adenosyl-L-methionine-dependent methyltransferase that catalyzes the formation of 5-methyl-uridine in tRNAs and 12S rRNA. Catalyzes the methylation of uridine at position 54 (m5U54) in all tRNAs. Specifically methylates the uridine in position 429 of 12S rRNA (m5U429). Does not affect RNA stability or mitochondrial translation. The chain is tRNA (uracil-5-)-methyltransferase homolog B (trmt2b) from Danio rerio (Zebrafish).